The primary structure comprises 87 residues: U3-theraphotoxin-Hhn1a 16 (87 aa).

Positions 1–24 (MVNMKASMFLTFAGLVLLFVVCYA) are cleaved as a signal peptide. Residues 25 to 52 (SESEEKEFPKEMLSSIFAVDNDFKQGER) constitute a propeptide that is removed on maturation. Disulfide bonds link Cys-54-Cys-67, Cys-61-Cys-72, and Cys-66-Cys-79.

This sequence belongs to the neurotoxin 10 (Hwtx-1) family. 51 (Hntx-8) subfamily. Hntx-8 sub-subfamily. As to expression, expressed by the venom gland.

It localises to the secreted. Its function is as follows. Ion channel inhibitor. The polypeptide is U3-theraphotoxin-Hhn1a 16 (Cyriopagopus hainanus (Chinese bird spider)).